A 348-amino-acid chain; its full sequence is Phosphate acyltransferase (348 aa).

This sequence belongs to the PlsX family. As to quaternary structure, homodimer. Probably interacts with PlsY.

The protein localises to the cytoplasm. The enzyme catalyses a fatty acyl-[ACP] + phosphate = an acyl phosphate + holo-[ACP]. It participates in lipid metabolism; phospholipid metabolism. Its function is as follows. Catalyzes the reversible formation of acyl-phosphate (acyl-PO(4)) from acyl-[acyl-carrier-protein] (acyl-ACP). This enzyme utilizes acyl-ACP as fatty acyl donor, but not acyl-CoA. This is Phosphate acyltransferase from Rhizorhabdus wittichii (strain DSM 6014 / CCUG 31198 / JCM 15750 / NBRC 105917 / EY 4224 / RW1) (Sphingomonas wittichii).